We begin with the raw amino-acid sequence, 122 residues long: UPF0102 protein XCV0816 (122 aa).

This sequence belongs to the UPF0102 family.

The sequence is that of UPF0102 protein XCV0816 from Xanthomonas euvesicatoria pv. vesicatoria (strain 85-10) (Xanthomonas campestris pv. vesicatoria).